The following is a 248-amino-acid chain: Ubiquinone biosynthesis O-methyltransferase (248 aa).

Residues arginine 41, glycine 72, aspartate 93, and methionine 136 each coordinate S-adenosyl-L-methionine.

The protein belongs to the methyltransferase superfamily. UbiG/COQ3 family.

It carries out the reaction a 3-demethylubiquinol + S-adenosyl-L-methionine = a ubiquinol + S-adenosyl-L-homocysteine + H(+). The enzyme catalyses a 3-(all-trans-polyprenyl)benzene-1,2-diol + S-adenosyl-L-methionine = a 2-methoxy-6-(all-trans-polyprenyl)phenol + S-adenosyl-L-homocysteine + H(+). It participates in cofactor biosynthesis; ubiquinone biosynthesis. In terms of biological role, O-methyltransferase that catalyzes the 2 O-methylation steps in the ubiquinone biosynthetic pathway. In Brucella abortus (strain 2308), this protein is Ubiquinone biosynthesis O-methyltransferase.